The primary structure comprises 899 residues: MSQSCMFCPKDELPMEPKLPKGYEPHDVEAKWYEFWTENGLFHADENSPKNPFSIVIPPPNVTGVLHMGHALNNTLQDILARWKRMDGHEVLWQPGTDHAGIATQNVVEKQLAAEGSSRHDLGREGFVDRVWQWRTESGGQIINQLKRLGASCDWERERFTMDEGLSRAVREVFVTLYEEGLIYRDNRLINWCPRCHTALSDLEVEHQDQKGNLWHLRYPVVGTDRHLVVATTRPETMLGDTAVAVHPEDERYADLIGKFIMLPLMDRQIPIIADEYVDKEFGSGAVKITPAHDFNDFEIGKRHDLEFINIFDESGVVNGNGGRYQGLERFEARTRVLADLDAAGLLEQTEEHLNAVGECYRCKTVIEPYMSLQWYVNVQPLAEKAIEAVQTGQTRIIPQQWEKTYFEWMFNIRDWCISRQIWWGHRIPAWFCAACNEVTVSREDPTACSHCGATELRQETDVLDTWFSSALWPFSTMGWPDKTVALEKFYPTSCLVTGFDILFFWVARMMMMGLKFMGQVPFKDVYIHALVRDAQGQKMSKSKGNVIDPLTVIDEYGTDAFRFTLAAFAAQGRDVKLSVDRIAGYRNFVNKLWNASRFALMNLEDFDPSGIDLDDCQLTLAERWILTRLIDVAAETGKALEEYKFNEAASVLYAFTWHEFCDWYIELSKDDLYGEDAARKATSQAVLYTVLEQLLRLLHPLMPFVTEEIWQALPGERPAVSIMSAAFSTVSELPEDRQGASHMERIMDVIKGVRNIRGEMNVPPGKRIAAVLDCKTSKAAEVMAAGEGYIKSLARIDDLAFGVAVERPAQAATQVAGDIEILLPLAGLIDLDEEQKRLNKEIAKVEKDVLMFSKKLSNESFLAKAPAAVLEKDRQKLADAEEKLSILKQGLEKLAALQ.

A 'HIGH' region motif is present at residues 60 to 70 (PNVTGVLHMGH). A 'KMSKS' region motif is present at residues 539–543 (KMSKS). Residue K542 coordinates ATP. The stretch at 827–898 (AGLIDLDEEQ…KQGLEKLAAL (72 aa)) forms a coiled coil.

Belongs to the class-I aminoacyl-tRNA synthetase family. ValS type 1 subfamily. Monomer.

It localises to the cytoplasm. It carries out the reaction tRNA(Val) + L-valine + ATP = L-valyl-tRNA(Val) + AMP + diphosphate. Catalyzes the attachment of valine to tRNA(Val). As ValRS can inadvertently accommodate and process structurally similar amino acids such as threonine, to avoid such errors, it has a 'posttransfer' editing activity that hydrolyzes mischarged Thr-tRNA(Val) in a tRNA-dependent manner. The protein is Valine--tRNA ligase of Syntrophotalea carbinolica (strain DSM 2380 / NBRC 103641 / GraBd1) (Pelobacter carbinolicus).